Here is a 498-residue protein sequence, read N- to C-terminus: Acetyl-coenzyme A carboxylase carboxyl transferase subunit beta, chloroplastic (498 aa).

Residues leucine 228–threonine 498 form the CoA carboxyltransferase N-terminal domain. Cysteine 232, cysteine 235, cysteine 251, and cysteine 254 together coordinate Zn(2+). Residues cysteine 232 to cysteine 254 form a C4-type zinc finger.

This sequence belongs to the AccD/PCCB family. In terms of assembly, acetyl-CoA carboxylase is a heterohexamer composed of biotin carboxyl carrier protein, biotin carboxylase and 2 subunits each of ACCase subunit alpha and ACCase plastid-coded subunit beta (accD). Requires Zn(2+) as cofactor.

It is found in the plastid. It localises to the chloroplast stroma. The enzyme catalyses N(6)-carboxybiotinyl-L-lysyl-[protein] + acetyl-CoA = N(6)-biotinyl-L-lysyl-[protein] + malonyl-CoA. It functions in the pathway lipid metabolism; malonyl-CoA biosynthesis; malonyl-CoA from acetyl-CoA: step 1/1. Component of the acetyl coenzyme A carboxylase (ACC) complex. Biotin carboxylase (BC) catalyzes the carboxylation of biotin on its carrier protein (BCCP) and then the CO(2) group is transferred by the transcarboxylase to acetyl-CoA to form malonyl-CoA. In Populus trichocarpa (Western balsam poplar), this protein is Acetyl-coenzyme A carboxylase carboxyl transferase subunit beta, chloroplastic.